Reading from the N-terminus, the 615-residue chain is Elongation factor 4 (615 aa).

One can recognise a tr-type G domain in the interval Ala14–Val196. GTP-binding positions include Asp26–Thr31 and Asn143–Asp146.

This sequence belongs to the TRAFAC class translation factor GTPase superfamily. Classic translation factor GTPase family. LepA subfamily.

It localises to the cell membrane. The enzyme catalyses GTP + H2O = GDP + phosphate + H(+). Required for accurate and efficient protein synthesis under certain stress conditions. May act as a fidelity factor of the translation reaction, by catalyzing a one-codon backward translocation of tRNAs on improperly translocated ribosomes. Back-translocation proceeds from a post-translocation (POST) complex to a pre-translocation (PRE) complex, thus giving elongation factor G a second chance to translocate the tRNAs correctly. Binds to ribosomes in a GTP-dependent manner. The sequence is that of Elongation factor 4 from Frankia alni (strain DSM 45986 / CECT 9034 / ACN14a).